Here is a 177-residue protein sequence, read N- to C-terminus: ATP synthase subunit delta (177 aa).

The protein belongs to the ATPase delta chain family. In terms of assembly, F-type ATPases have 2 components, F(1) - the catalytic core - and F(0) - the membrane proton channel. F(1) has five subunits: alpha(3), beta(3), gamma(1), delta(1), epsilon(1). F(0) has three main subunits: a(1), b(2) and c(10-14). The alpha and beta chains form an alternating ring which encloses part of the gamma chain. F(1) is attached to F(0) by a central stalk formed by the gamma and epsilon chains, while a peripheral stalk is formed by the delta and b chains.

Its subcellular location is the cell inner membrane. F(1)F(0) ATP synthase produces ATP from ADP in the presence of a proton or sodium gradient. F-type ATPases consist of two structural domains, F(1) containing the extramembraneous catalytic core and F(0) containing the membrane proton channel, linked together by a central stalk and a peripheral stalk. During catalysis, ATP synthesis in the catalytic domain of F(1) is coupled via a rotary mechanism of the central stalk subunits to proton translocation. Functionally, this protein is part of the stalk that links CF(0) to CF(1). It either transmits conformational changes from CF(0) to CF(1) or is implicated in proton conduction. In Shewanella sp. (strain MR-4), this protein is ATP synthase subunit delta.